Consider the following 101-residue polypeptide: Small ribosomal subunit protein bS6 (101 aa).

The protein belongs to the bacterial ribosomal protein bS6 family.

Functionally, binds together with bS18 to 16S ribosomal RNA. This chain is Small ribosomal subunit protein bS6, found in Pseudarthrobacter chlorophenolicus (strain ATCC 700700 / DSM 12829 / CIP 107037 / JCM 12360 / KCTC 9906 / NCIMB 13794 / A6) (Arthrobacter chlorophenolicus).